We begin with the raw amino-acid sequence, 289 residues long: MRKLTSFVCGTGAGLAVYYLQRLRDPQATVNNSWTNSEKPVDPWALWDTNWDCREPRALVRPLRNSQPEEENRYNAELEKAKAKKARHIILVRHGEYLDVGDSDDTHHLTERGRKQAEFTGKRLCELGIKWDKVVASTMVRAQETSDIILKQIDFEKEKVVNCAFLREGAPIPPQPPVGHWKPEASQFLRDGSRIEAAFRRYFYRAYPDQEKESYTLIVGHGNVIRYFVCRALQFPAEGWLRISINHASITWLTISPSGNVSIKYLGDSGFMPAELLTHRIPRDAKNVV.

A helical membrane pass occupies residues 7-23 (FVCGTGAGLAVYYLQRL).

This sequence belongs to the phosphoglycerate mutase family. BPG-dependent PGAM subfamily. In terms of assembly, interacts with Pk92B/ASK1.

It localises to the mitochondrion outer membrane. The catalysed reaction is O-phospho-L-seryl-[protein] + H2O = L-seryl-[protein] + phosphate. It catalyses the reaction O-phospho-L-threonyl-[protein] + H2O = L-threonyl-[protein] + phosphate. Functionally, displays phosphatase activity for serine/threonine residues, and dephosphorylates and activates Pk92B kinase. Has apparently no phosphoglycerate mutase activity. In Drosophila erecta (Fruit fly), this protein is Serine/threonine-protein phosphatase Pgam5, mitochondrial.